A 186-amino-acid polypeptide reads, in one-letter code: ATP synthase subunit delta (186 aa).

It belongs to the ATPase delta chain family. As to quaternary structure, F-type ATPases have 2 components, F(1) - the catalytic core - and F(0) - the membrane proton channel. F(1) has five subunits: alpha(3), beta(3), gamma(1), delta(1), epsilon(1). CF(0) has four main subunits: a(1), b(1), b'(1) and c(10-14). The alpha and beta chains form an alternating ring which encloses part of the gamma chain. F(1) is attached to F(0) by a central stalk formed by the gamma and epsilon chains, while a peripheral stalk is formed by the delta, b and b' chains.

It localises to the cell inner membrane. Its function is as follows. F(1)F(0) ATP synthase produces ATP from ADP in the presence of a proton or sodium gradient. F-type ATPases consist of two structural domains, F(1) containing the extramembraneous catalytic core and F(0) containing the membrane proton channel, linked together by a central stalk and a peripheral stalk. During catalysis, ATP synthesis in the catalytic domain of F(1) is coupled via a rotary mechanism of the central stalk subunits to proton translocation. This protein is part of the stalk that links CF(0) to CF(1). It either transmits conformational changes from CF(0) to CF(1) or is implicated in proton conduction. This chain is ATP synthase subunit delta, found in Roseobacter denitrificans (strain ATCC 33942 / OCh 114) (Erythrobacter sp. (strain OCh 114)).